The following is a 1166-amino-acid chain: UDP-N-acetylglucosamine transferase subunit ALG13 (1166 aa).

Residues M1–C125 are glycosyltransferase activity. Residues T126–L394 form a deubiquitinase activity region. The region spanning L225–K346 is the OTU domain. D233 functions as the For deubiquitinase activity in the catalytic mechanism. C236 serves as the catalytic Nucleophile; for deubiquitinase activity. Catalysis depends on H339, which acts as the For deubiquitinase activity. The tract at residues A393–P438 is disordered. One can recognise a Tudor domain in the interval Y486–P546. 3 stretches are compositionally biased toward pro residues: residues P921 to A930, P941 to S957, and Q1004 to Q1034. Disordered stretches follow at residues P921 to P966 and Q998 to L1056.

This sequence belongs to the glycosyltransferase 28 family. As to quaternary structure, forms with ALG14 the active heterodimeric UDP-N-acetylglucosamine transferase complex. In terms of assembly, not able to interact with ALG14 to form an active UDP-N-acetylglucosamine transferase complex.

Its subcellular location is the endoplasmic reticulum membrane. It carries out the reaction an N-acetyl-alpha-D-glucosaminyl-diphospho-di-trans,poly-cis-dolichol + UDP-N-acetyl-alpha-D-glucosamine = an N,N'-diacetylchitobiosyl-diphospho-di-trans,poly-cis-dolichol + UDP + H(+). Its pathway is protein modification; protein glycosylation. Catalytic subunit of the UDP-N-acetylglucosamine transferase complex that operates in the biosynthetic pathway of dolichol-linked oligosaccharides, the glycan precursors employed in protein asparagine (N)-glycosylation. The assembly of dolichol-linked oligosaccharides begins on the cytosolic side of the endoplasmic reticulum membrane and finishes in its lumen. The sequential addition of sugars to dolichol pyrophosphate produces dolichol-linked oligosaccharides containing fourteen sugars, including two GlcNAcs, nine mannoses and three glucoses. Once assembled, the oligosaccharide is transferred from the lipid to nascent proteins by oligosaccharyltransferases. On the cytoplasmic face of the endoplasmic reticulum, the dimeric ALG13/ALG14 complex catalyzes the second step of dolichol pyrophosphate biosynthesis, transferring a beta1,4-linked N-acetylglucosamine (GlcNAc) from UDP-GlcNAc to GlcNAc-pyrophosphatedolichol (Gn-PDol) to produce N,N'-diacetylchitobiosyl diphosphodolichol. N,N'-diacetylchitobiosyl diphosphodolichol is a substrate for ALG1, the following enzyme in the biosynthetic pathway. Its function is as follows. No glycosyltransferase or deubiquitinase activity is detected for this potential multifunctional enzyme. The polypeptide is UDP-N-acetylglucosamine transferase subunit ALG13 (Mus musculus (Mouse)).